Consider the following 796-residue polypeptide: High affinity nerve growth factor receptor (796 aa).

The signal sequence occupies residues 1–32; sequence MLRGGRRGQLGWHSWAAGPGSLLAWLILASAG. Residues 33 to 423 lie on the Extracellular side of the membrane; sequence AAPCPDACCP…TPFGVSVAVG (391 aa). 2 disulfides stabilise this stretch: Cys-36/Cys-41 and Cys-40/Cys-50. 13 N-linked (GlcNAc...) asparagine glycosylation sites follow: Asn-67, Asn-95, Asn-121, Asn-188, Asn-202, Asn-253, Asn-262, Asn-281, Asn-318, Asn-323, Asn-338, Asn-358, and Asn-401. LRR repeat units follow at residues 90 to 113 and 116 to 137; these read LGELRNLTIVKSGLRFVAPDAFHF and RLSRLNLSFNALESLSWKTVQG. An LRRCT domain is found at 148–193; it reads NPLHCSCALRWLQRWEEEGLGGVPEQKLQCHGQGPLAHMPNASCGV. A disulfide bridge links Cys-154 with Cys-191. Ig-like C2-type domains follow at residues 194-283 and 299-365; these read PTLK…VNVS and WCIP…LAAN. Cys-215 and Cys-265 are oxidised to a cystine. A disulfide bond links Cys-300 and Cys-345. A helical transmembrane segment spans residues 424-439; sequence LAVFACLFLSTLLLVL. The Cytoplasmic portion of the chain corresponds to 440–796; that stretch reads NKCGRRNKFG…APPVYLDVLG (357 aa). An interaction with SQSTM1 region spans residues 469–490; that stretch reads MTLGGSSLSPTEGKGSGLQGHI. Residue Tyr-496 is modified to Phosphotyrosine; by autocatalysis. In terms of domain architecture, Protein kinase spans 510 to 781; it reads IVLKWELGEG…HSIKDVHARL (272 aa). Residue 516 to 524 participates in ATP binding; sequence LGEGAFGKV. Positions 537–541 match the DXXLL motif; sequence DKMLV. Lys-544 provides a ligand contact to ATP. A DXXLL motif is present at residues 607 to 611; the sequence is DAKLL. Asp-650 (proton acceptor) is an active-site residue. Tyr-676, Tyr-680, Tyr-681, and Tyr-791 each carry phosphotyrosine; by autocatalysis.

The protein belongs to the protein kinase superfamily. Tyr protein kinase family. Insulin receptor subfamily. In terms of assembly, exists in a dynamic equilibrium between monomeric (low affinity) and dimeric (high affinity) structures. Homodimerization is induced by binding of a NGF dimer. Interacts with SQSTM1; bridges NTRK1 to NGFR. Forms a ternary complex with NGFR and KIDINS220; this complex is affected by the expression levels of KIDINS220 and an increase in KIDINS220 expression leads to a decreased association of NGFR and NTRK1. Interacts with SH2D1A; regulates NTRK1. Interacts (phosphorylated upon activation by NGF) with SHC1; mediates SHC1 phosphorylation and activation. Interacts (phosphorylated upon activation by NGF) with PLCG1; mediates PLCG1 phosphorylation and activation. Interacts (phosphorylated) with SH2B1 and SH2B2. Interacts with GRB2. Interacts with PIK3R1. Interacts with FRS2. Interacts with SORT1; may regulate NTRK1 anterograde axonal transport. Interacts with RAB7A. Found in a complex, at least composed of KIDINS220, MAGI2, NTRK1 and RAPGEF2; the complex is mainly formed at late endosomes in a nerve growth factor (NGF)-dependent manner. Interacts with RAPGEF2; the interaction is strengthened after NGF stimulation. Interacts with PTPRS. Interacts with USP36; USP36 does not deubiquitinate NTRK1. Interacts with GGA3. Interacts with TSPAN1; this interaction promotes NTRK1 stability. Post-translationally, ligand-mediated autophosphorylation. Interaction with SQSTM1 is phosphotyrosine-dependent. Autophosphorylation at Tyr-496 mediates interaction and phosphorylation of SHC1. N-glycosylated. Isoform TrkA-I and isoform TrkA-II are N-glycosylated. In terms of processing, ubiquitinated. Undergoes polyubiquitination upon activation; regulated by NGFR. Ubiquitination by NEDD4L leads to degradation. Ubiquitination regulates the internalization of the receptor. Isoform TrkA-I is found in most non-neuronal tissues. Isoform TrkA-II is primarily expressed in neuronal cells. TrkA-III is specifically expressed by pluripotent neural stem and neural crest progenitors.

It localises to the cell membrane. It is found in the early endosome membrane. The protein localises to the late endosome membrane. The protein resides in the recycling endosome membrane. The catalysed reaction is L-tyrosyl-[protein] + ATP = O-phospho-L-tyrosyl-[protein] + ADP + H(+). The pro-survival signaling effect of NTRK1 in neurons requires its endocytosis into signaling early endosomes and its retrograde axonal transport. This is regulated by different proteins including CFL1, RAC1 and SORT1. NTF3 is unable to induce this signaling probably due to the lability of the NTF3-NTRK1 complex in endosomes. SH2D1A inhibits the autophosphorylation of the receptor, and alters the recruitment and activation of downstream effectors and signaling cascades. Regulated by NGFR. Functionally, receptor tyrosine kinase involved in the development and the maturation of the central and peripheral nervous systems through regulation of proliferation, differentiation and survival of sympathetic and nervous neurons. High affinity receptor for NGF which is its primary ligand. Can also bind and be activated by NTF3/neurotrophin-3. However, NTF3 only supports axonal extension through NTRK1 but has no effect on neuron survival. Upon dimeric NGF ligand-binding, undergoes homodimerization, autophosphorylation and activation. Recruits, phosphorylates and/or activates several downstream effectors including SHC1, FRS2, SH2B1, SH2B2 and PLCG1 that regulate distinct overlapping signaling cascades driving cell survival and differentiation. Through SHC1 and FRS2 activates a GRB2-Ras-MAPK cascade that regulates cell differentiation and survival. Through PLCG1 controls NF-Kappa-B activation and the transcription of genes involved in cell survival. Through SHC1 and SH2B1 controls a Ras-PI3 kinase-AKT1 signaling cascade that is also regulating survival. In absence of ligand and activation, may promote cell death, making the survival of neurons dependent on trophic factors. Resistant to NGF, it constitutively activates AKT1 and NF-kappa-B and is unable to activate the Ras-MAPK signaling cascade. Antagonizes the anti-proliferative NGF-NTRK1 signaling that promotes neuronal precursors differentiation. Isoform TrkA-III promotes angiogenesis and has oncogenic activity when overexpressed. The chain is High affinity nerve growth factor receptor (NTRK1) from Homo sapiens (Human).